The following is a 168-amino-acid chain: Cofilin-1-B (168 aa).

Position 2 is an N-acetylalanine (A2). Residues 4 to 153 (GVMVSDDVVK…NDPCNLADKL (150 aa)) form the ADF-H domain. The Nuclear localization signal signature appears at 30 to 34 (KKRKK).

It belongs to the actin-binding proteins ADF family. Inactive when phosphorylated. Phosphorylation levels vary during development. Oocytes contain only the phosphorylated form, and 80-95% of cfl1 protein is phosphorylated in unfertilized eggs. Rapid dephosphorylation occurs within 30 minutes after fertilization. Phosphorylation levels increase again between the morula and blastula stages (5-8 hpf) and then decrease again as gastrulation approaches. Dephosphorylated by pdxp. In terms of tissue distribution, expressed diffusely in both animal and vegetal hemispheres of the oocyte. During cleavage, expression accumulates around the cleavage furrow, along the vegetal membrane, and later in the midbody. Strongly expressed in the animal hemisphere during blastula stages, with most cells showing expression by gastrulation. By stage 17, expression is highest in cells of the developing neuroectoderm, and at stage 24 the notochord, neural tube, neural crest, somites and some cells of the archenteron show high expression. By stage 35, expression has declined in the notochord, but remains in the neural tube, epidermis and a layer of cells in the archenteron. Also highly expressed in the retina and neuronal cell bodies at the base of the cement gland but not the cement gland itself. At stage 38, expression is widespread, being highest in the nervous system and retina. In the adult, expression is high in the brain, heart, oocyte, stomach, and low in skeletal muscle.

The protein resides in the nucleus matrix. It is found in the cytoplasm. The protein localises to the cytoskeleton. Its subcellular location is the cell cortex. It localises to the membrane. Functionally, may play a role in the regulation of cell morphology and cytoskeletal organization. Binds to F-actin and exhibits pH-sensitive F-actin depolymerizing activity. Required for formation of the cleavage furrow during cytokinesis. The sequence is that of Cofilin-1-B (cfl1-b) from Xenopus laevis (African clawed frog).